Here is a 312-residue protein sequence, read N- to C-terminus: Homoserine O-acetyltransferase (312 aa).

The active-site Acyl-thioester intermediate is cysteine 142. Substrate-binding residues include lysine 163 and serine 192. Histidine 235 (proton acceptor) is an active-site residue. Glutamate 237 is a catalytic residue. Residue arginine 249 coordinates substrate.

It belongs to the MetA family.

The protein resides in the cytoplasm. The enzyme catalyses L-homoserine + acetyl-CoA = O-acetyl-L-homoserine + CoA. It functions in the pathway amino-acid biosynthesis; L-methionine biosynthesis via de novo pathway; O-acetyl-L-homoserine from L-homoserine: step 1/1. Transfers an acetyl group from acetyl-CoA to L-homoserine, forming acetyl-L-homoserine. The chain is Homoserine O-acetyltransferase from Chelativorans sp. (strain BNC1).